Reading from the N-terminus, the 649-residue chain is Transcription factor E2-alpha (649 aa).

5 disordered regions span residues 34–107, 127–206, 222–267, 291–325, and 339–382; these read GKGR…SERS, LPGE…SAKT, LHPS…GLQQ, SAAP…SSSG, and DHSS…DGGL. Polar residues-rich tracts occupy residues 56-76 and 85-94; these read SSGS…SRTY and SHNSLPSSTF. Residues 127–143 are compositionally biased toward low complexity; it reads LPGELGLSSPGPLSPSG. Serine 135 and serine 140 each carry phosphoserine. Positions 145–156 are enriched in polar residues; sequence KSGSQYYPSYPS. Positions 171-177 match the Nuclear localization signal motif; sequence SKKVRKV. Low complexity-rich tracts occupy residues 182-193 and 242-259; these read PSSVYPSSSGDS and GDGS…SVGS. The segment covering 339 to 352 has biased composition (low complexity); it reads DHSSNNFSPSPSTP. A Phosphothreonine modification is found at threonine 351. A Phosphoserine modification is found at serine 355. An Omega-N-methylarginine modification is found at arginine 367. Phosphoserine is present on serine 375. The segment at 385 to 420 is leucine-zipper; the sequence is LSKMEDRLDEAIHVLRSHAVGTASDLHGLLPGHGAL. Positions 431 to 547 are disordered; sequence GGRHAGLVGG…KAEREKERRV (117 aa). A compositionally biased stretch (polar residues) spans 448-469; it reads TSGTSLLHTHASLPSQASSLPD. Residue lysine 494 forms a Glycyl lysine isopeptide (Lys-Gly) (interchain with G-Cter in SUMO2) linkage. The residue at position 524 (serine 524) is a Phosphoserine. A Phosphothreonine modification is found at glutamate 529. The span at 537–547 shows a compositional bias: basic and acidic residues; sequence QKAEREKERRV. The 54-residue stretch at 544–597 folds into the bHLH domain; the sequence is ERRVANNARERLRVRDINEAFKELGRMCQLHLSSEKPQTKLLILHQAVAVILSL. A Glycyl lysine isopeptide (Lys-Gly) (interchain with G-Cter in SUMO2) cross-link involves residue lysine 620.

As to quaternary structure, homodimer. Heterodimer; efficient DNA binding requires dimerization with another bHLH protein. Forms a heterodimer with TWIST1 and TWIST2. Forms a heterodimer with NEUROD1; the heterodimer is inhibited in presence of ID2, but not NR0B2, to E-box element. Forms a heterodimer with TCF15; the heterodimer binds E-box element. Forms a heterodimer with MYOG; heterodimerization enhances MYOG DNA-binding and transcriptional activities. Forms a heterodimer with ATOH8; repress transcription of TCF3 and TCF3-NEUROG3 dimer-induced transactivation of E box-dependent promoters. Component of a nuclear TAL-1 complex composed at least of CBFA2T3, LDB1, TAL1 and TCF3. Interacts with NEUROD2. Interacts with EP300. Interacts with PTF1A, TGFB1I1 and UBE2I. Interacts with BHLHA9. Interacts with ASB2; the interaction is mediated by SKP2 and targets TCF3 for Notch-induced proteasomal degradation. Interacts with transcription factor ASCL5/AmeloD. In terms of assembly, interacts with RALGAPA1. Interacts with FIGLA. Forms a heterodimer with ATOH7; required for ATOH7 DNA-binding. Post-translationally, phosphorylated following NGF stimulation. In terms of processing, undergoes Notch-induced ubiquitination and subsequent proteasomal degradation which is mediated by ASB1 or ASB2, the substrate-recognition components of probable ECS E3 ubiquitin-protein ligase complexes.

It localises to the nucleus. In terms of biological role, transcriptional regulator. Involved in the initiation of neuronal differentiation and mesenchymal to epithelial transition. Heterodimers between TCF3 and tissue-specific basic helix-loop-helix (bHLH) proteins play major roles in determining tissue-specific cell fate during embryogenesis, like muscle or early B-cell differentiation. Together with TCF15, required for the mesenchymal to epithelial transition. Dimers bind DNA on E-box motifs: 5'-CANNTG-3'. Binds to the kappa-E2 site in the kappa immunoglobulin gene enhancer. Binds to IEB1 and IEB2, which are short DNA sequences in the insulin gene transcription control region. Facilitates ATOH7 binding to DNA at the consensus sequence 5'-CAGGTG-3', and positively regulates transcriptional activity. The sequence is that of Transcription factor E2-alpha (TCF3) from Mesocricetus auratus (Golden hamster).